Consider the following 124-residue polypeptide: ATP synthase epsilon chain (124 aa).

This sequence belongs to the ATPase epsilon chain family. F-type ATPases have 2 components, CF(1) - the catalytic core - and CF(0) - the membrane proton channel. CF(1) has five subunits: alpha(3), beta(3), gamma(1), delta(1), epsilon(1). CF(0) has three main subunits: a, b and c.

It localises to the cell membrane. In terms of biological role, produces ATP from ADP in the presence of a proton gradient across the membrane. This Streptomyces griseus subsp. griseus (strain JCM 4626 / CBS 651.72 / NBRC 13350 / KCC S-0626 / ISP 5235) protein is ATP synthase epsilon chain.